A 1298-amino-acid chain; its full sequence is Phosphoribosylformylglycinamidine synthase (1298 aa).

A disordered region spans residues 301-328; it reads APFPGASTGSGGEIRDEGATGRGAKPKA. ATP contacts are provided by residues 305-316, 384-386, and Ala676; these read GASTGSGGEIRD and TGY. Asp677, Glu716, Asn720, and Asp884 together coordinate Mg(2+). Ser886 contacts ATP. The 254-residue stretch at 1045–1298 folds into the Glutamine amidotransferase type-1 domain; sequence VAVLREQGVN…MFRNARVWVN (254 aa). The active-site Nucleophile is the Cys1138. Active-site residues include His1263 and Glu1265.

The protein in the N-terminal section; belongs to the FGAMS family. In terms of assembly, monomer.

The protein resides in the cytoplasm. It catalyses the reaction N(2)-formyl-N(1)-(5-phospho-beta-D-ribosyl)glycinamide + L-glutamine + ATP + H2O = 2-formamido-N(1)-(5-O-phospho-beta-D-ribosyl)acetamidine + L-glutamate + ADP + phosphate + H(+). The protein operates within purine metabolism; IMP biosynthesis via de novo pathway; 5-amino-1-(5-phospho-D-ribosyl)imidazole from N(2)-formyl-N(1)-(5-phospho-D-ribosyl)glycinamide: step 1/2. Functionally, phosphoribosylformylglycinamidine synthase involved in the purines biosynthetic pathway. Catalyzes the ATP-dependent conversion of formylglycinamide ribonucleotide (FGAR) and glutamine to yield formylglycinamidine ribonucleotide (FGAM) and glutamate. This Pseudomonas fluorescens (strain Pf0-1) protein is Phosphoribosylformylglycinamidine synthase.